Here is a 346-residue protein sequence, read N- to C-terminus: 4-hydroxy-2-oxovalerate aldolase 2 (346 aa).

The Pyruvate carboxyltransferase domain maps to 8–260 (VTVHDMTLRD…ETGVDVFKIQ (253 aa)). 16–17 (RD) contacts substrate. D17 contributes to the Mn(2+) binding site. The active-site Proton acceptor is the H20. Substrate-binding residues include S170 and H199. Residues H199 and H201 each contribute to the Mn(2+) site. Y290 is a substrate binding site.

It belongs to the 4-hydroxy-2-oxovalerate aldolase family.

It catalyses the reaction (S)-4-hydroxy-2-oxopentanoate = acetaldehyde + pyruvate. This chain is 4-hydroxy-2-oxovalerate aldolase 2 (bphX3), found in Metapseudomonas furukawaii (Pseudomonas furukawaii).